Consider the following 424-residue polypeptide: Serine--tRNA ligase (424 aa).

L-serine is bound at residue 233-235 (TAE). Residues 264-266 (RRE) and Val-280 contribute to the ATP site. Glu-287 serves as a coordination point for L-serine. 351-354 (EISS) contacts ATP. Ser-386 serves as a coordination point for L-serine.

Belongs to the class-II aminoacyl-tRNA synthetase family. Type-1 seryl-tRNA synthetase subfamily. As to quaternary structure, homodimer. The tRNA molecule binds across the dimer.

Its subcellular location is the cytoplasm. It catalyses the reaction tRNA(Ser) + L-serine + ATP = L-seryl-tRNA(Ser) + AMP + diphosphate + H(+). The catalysed reaction is tRNA(Sec) + L-serine + ATP = L-seryl-tRNA(Sec) + AMP + diphosphate + H(+). It participates in aminoacyl-tRNA biosynthesis; selenocysteinyl-tRNA(Sec) biosynthesis; L-seryl-tRNA(Sec) from L-serine and tRNA(Sec): step 1/1. In terms of biological role, catalyzes the attachment of serine to tRNA(Ser). Is also able to aminoacylate tRNA(Sec) with serine, to form the misacylated tRNA L-seryl-tRNA(Sec), which will be further converted into selenocysteinyl-tRNA(Sec). The sequence is that of Serine--tRNA ligase from Kosmotoga olearia (strain ATCC BAA-1733 / DSM 21960 / TBF 19.5.1).